The primary structure comprises 290 residues: Phosphoribosylaminoimidazole-succinocarboxamide synthase (290 aa).

It belongs to the SAICAR synthetase family.

It carries out the reaction 5-amino-1-(5-phospho-D-ribosyl)imidazole-4-carboxylate + L-aspartate + ATP = (2S)-2-[5-amino-1-(5-phospho-beta-D-ribosyl)imidazole-4-carboxamido]succinate + ADP + phosphate + 2 H(+). The protein operates within purine metabolism; IMP biosynthesis via de novo pathway; 5-amino-1-(5-phospho-D-ribosyl)imidazole-4-carboxamide from 5-amino-1-(5-phospho-D-ribosyl)imidazole-4-carboxylate: step 1/2. This Haemophilus influenzae (strain PittGG) protein is Phosphoribosylaminoimidazole-succinocarboxamide synthase.